Here is a 562-residue protein sequence, read N- to C-terminus: Dihydroxy-acid dehydratase (562 aa).

Asp-78 serves as a coordination point for Mg(2+). Residue Cys-119 coordinates [2Fe-2S] cluster. Positions 120 and 121 each coordinate Mg(2+). An N6-carboxylysine modification is found at Lys-121. Cys-192 contacts [2Fe-2S] cluster. Glu-449 contacts Mg(2+). The active-site Proton acceptor is the Ser-475.

This sequence belongs to the IlvD/Edd family. Homodimer. [2Fe-2S] cluster serves as cofactor. The cofactor is Mg(2+).

The enzyme catalyses (2R)-2,3-dihydroxy-3-methylbutanoate = 3-methyl-2-oxobutanoate + H2O. It catalyses the reaction (2R,3R)-2,3-dihydroxy-3-methylpentanoate = (S)-3-methyl-2-oxopentanoate + H2O. It functions in the pathway amino-acid biosynthesis; L-isoleucine biosynthesis; L-isoleucine from 2-oxobutanoate: step 3/4. It participates in amino-acid biosynthesis; L-valine biosynthesis; L-valine from pyruvate: step 3/4. Functions in the biosynthesis of branched-chain amino acids. Catalyzes the dehydration of (2R,3R)-2,3-dihydroxy-3-methylpentanoate (2,3-dihydroxy-3-methylvalerate) into 2-oxo-3-methylpentanoate (2-oxo-3-methylvalerate) and of (2R)-2,3-dihydroxy-3-methylbutanoate (2,3-dihydroxyisovalerate) into 2-oxo-3-methylbutanoate (2-oxoisovalerate), the penultimate precursor to L-isoleucine and L-valine, respectively. This chain is Dihydroxy-acid dehydratase, found in Aliarcobacter butzleri (strain RM4018) (Arcobacter butzleri).